A 248-amino-acid polypeptide reads, in one-letter code: Ureidoacrylate amidohydrolase RutB (248 aa).

Residue D41 is the Proton acceptor of the active site. K150 is a catalytic residue. Catalysis depends on C183, which acts as the Nucleophile.

It belongs to the isochorismatase family. RutB subfamily.

The catalysed reaction is (Z)-3-ureidoacrylate + H2O + H(+) = (Z)-3-aminoacrylate + NH4(+) + CO2. It catalyses the reaction (Z)-3-ureidoacrylate + H2O = (Z)-3-aminoacrylate + carbamate + H(+). It carries out the reaction (Z)-2-methylureidoacrylate + H2O + H(+) = (Z)-2-methylaminoacrylate + NH4(+) + CO2. Its function is as follows. Hydrolyzes ureidoacrylate to form aminoacrylate and carbamate. The carbamate hydrolyzes spontaneously, thereby releasing one of the nitrogen atoms of the pyrimidine ring as ammonia and one of its carbon atoms as CO2. In Methylorubrum extorquens (strain ATCC 14718 / DSM 1338 / JCM 2805 / NCIMB 9133 / AM1) (Methylobacterium extorquens), this protein is Ureidoacrylate amidohydrolase RutB.